A 544-amino-acid chain; its full sequence is CTP synthase (544 aa).

Positions 1–265 are amidoligase domain; the sequence is MTQYIFITGG…DDLVVKHFGL (265 aa). A CTP-binding site is contributed by serine 13. Residue serine 13 participates in UTP binding. ATP is bound by residues 14-19 and aspartate 71; that span reads SLGKGI. Residues aspartate 71 and glutamate 139 each contribute to the Mg(2+) site. CTP is bound by residues 146–148, 186–191, and lysine 222; these read DIE and KTKPTQ. Residues 186 to 191 and lysine 222 each bind UTP; that span reads KTKPTQ. The Glutamine amidotransferase type-1 domain occupies 290-541; that stretch reads TVAMVGKYVN…IAAALDYQTE (252 aa). Position 351 (glycine 351) interacts with L-glutamine. Cysteine 378 functions as the Nucleophile; for glutamine hydrolysis in the catalytic mechanism. L-glutamine is bound by residues 379 to 382, glutamate 402, and arginine 469; that span reads LGLQ. Active-site residues include histidine 514 and glutamate 516.

This sequence belongs to the CTP synthase family. As to quaternary structure, homotetramer.

It catalyses the reaction UTP + L-glutamine + ATP + H2O = CTP + L-glutamate + ADP + phosphate + 2 H(+). It carries out the reaction L-glutamine + H2O = L-glutamate + NH4(+). The catalysed reaction is UTP + NH4(+) + ATP = CTP + ADP + phosphate + 2 H(+). It functions in the pathway pyrimidine metabolism; CTP biosynthesis via de novo pathway; CTP from UDP: step 2/2. With respect to regulation, allosterically activated by GTP, when glutamine is the substrate; GTP has no effect on the reaction when ammonia is the substrate. The allosteric effector GTP functions by stabilizing the protein conformation that binds the tetrahedral intermediate(s) formed during glutamine hydrolysis. Inhibited by the product CTP, via allosteric rather than competitive inhibition. Functionally, catalyzes the ATP-dependent amination of UTP to CTP with either L-glutamine or ammonia as the source of nitrogen. Regulates intracellular CTP levels through interactions with the four ribonucleotide triphosphates. The sequence is that of CTP synthase from Dichelobacter nodosus (strain VCS1703A).